A 441-amino-acid polypeptide reads, in one-letter code: Xaa-Pro dipeptidase (441 aa).

5 residues coordinate Mn(2+): D244, D255, H336, E381, and E420.

The protein belongs to the peptidase M24B family. Bacterial-type prolidase subfamily. Mn(2+) serves as cofactor.

The enzyme catalyses Xaa-L-Pro dipeptide + H2O = an L-alpha-amino acid + L-proline. Its function is as follows. Splits dipeptides with a prolyl residue in the C-terminal position. The protein is Xaa-Pro dipeptidase of Xanthomonas oryzae pv. oryzae (strain MAFF 311018).